The following is a 157-amino-acid chain: Transcriptional repressor NrdR (157 aa).

Residues 1–21 (MRCPYCGSEDSQVKDSRPAED) form a disordered region. The segment at 3-34 (CPYCGSEDSQVKDSRPAEDGNAIRRRRICPDC) is a zinc-finger region. Over residues 11–21 (SQVKDSRPAED) the composition is skewed to basic and acidic residues. An ATP-cone domain is found at 49–139 (LMIIKKTGRK…VYRDFSHAED (91 aa)).

Belongs to the NrdR family. Zn(2+) serves as cofactor.

Negatively regulates transcription of bacterial ribonucleotide reductase nrd genes and operons by binding to NrdR-boxes. This is Transcriptional repressor NrdR from Sinorhizobium medicae (strain WSM419) (Ensifer medicae).